An 835-amino-acid chain; its full sequence is Transcription intermediary factor 1-beta (835 aa).

A compositionally biased stretch (low complexity) spans methionine 1 to serine 19. The segment at methionine 1 to serine 49 is disordered. Alanine 2 carries the N-acetylalanine modification. Residues serine 19 and serine 26 each carry the phosphoserine modification. Residue lysine 31 forms a Glycyl lysine isopeptide (Lys-Gly) (interchain with G-Cter in SUMO2) linkage. Positions alanine 35 to serine 49 are enriched in low complexity. Phosphoserine is present on serine 50. The segment at cysteine 65 to lysine 121 adopts an RING-type zinc-finger fold. The RBCC domain stretch occupies residues cysteine 65 to leucine 376. Residue lysine 127 forms a Glycyl lysine isopeptide (Lys-Gly) (interchain with G-Cter in SUMO2) linkage. Serine 138 is subject to Phosphoserine. The segment at aspartate 148–threonine 195 adopts a B box-type 1; atypical zinc-finger fold. Zn(2+) is bound by residues cysteine 153, cysteine 156, cysteine 177, and histidine 181. Lysine 199 is covalently cross-linked (Glycyl lysine isopeptide (Lys-Gly) (interchain with G-Cter in SUMO2)). Residues glutamate 204–leucine 245 form a B box-type 2 zinc finger. Zn(2+)-binding residues include cysteine 209, histidine 212, cysteine 232, and histidine 237. A leucine zipper alpha helical coiled-coil region region spans residues glutamate 246 to leucine 376. An interaction with MAGEC2 region spans residues aspartate 247 to leucine 376. Residues lysine 254 and lysine 261 each participate in a glycyl lysine isopeptide (Lys-Gly) (interchain with G-Cter in SUMO2) cross-link. Lysine 266 carries the post-translational modification N6-acetyllysine. Lysine 272 is covalently cross-linked (Glycyl lysine isopeptide (Lys-Gly) (interchain with G-Cter in SUMO2)). Residue lysine 304 is modified to N6-acetyllysine; alternate. Lysine 304 is covalently cross-linked (Glycyl lysine isopeptide (Lys-Gly) (interchain with G-Cter in SUMO2); alternate). Residue lysine 319 forms a Glycyl lysine isopeptide (Lys-Gly) (interchain with G-Cter in SUMO2) linkage. Lysine 340 is modified (N6-acetyllysine). Residue lysine 366 forms a Glycyl lysine isopeptide (Lys-Gly) (interchain with G-Cter in SUMO2) linkage. Positions lysine 366 to phenylalanine 370 are involved in binding PPP1CA. An N6-acetyllysine; alternate modification is found at lysine 377. Residue lysine 377 forms a Glycyl lysine isopeptide (Lys-Gly) (interchain with G-Cter in SUMO2); alternate linkage. A Glycyl lysine isopeptide (Lys-Gly) (interchain with G-Cter in SUMO1); alternate cross-link involves residue lysine 377. Lysine 407 is covalently cross-linked (Glycyl lysine isopeptide (Lys-Gly) (interchain with G-Cter in SUMO2)). The disordered stretch occupies residues glutamate 411–glycine 480. At serine 417 the chain carries Phosphoserine. Lysine 434 is covalently cross-linked (Glycyl lysine isopeptide (Lys-Gly) (interchain with G-Cter in SUMO2)). Residues lysine 434 to methionine 443 are compositionally biased toward polar residues. Serine 437, serine 439, and serine 453 each carry phosphoserine. Residue lysine 469 forms a Glycyl lysine isopeptide (Lys-Gly) (interchain with G-Cter in SUMO2); alternate linkage. Lysine 469 is covalently cross-linked (Glycyl lysine isopeptide (Lys-Gly) (interchain with G-Cter in SUMO1); alternate). The residue at position 470 (arginine 470) is a Citrulline. The residue at position 471 (serine 471) is a Phosphoserine. Arginine 472 carries the post-translational modification Citrulline. A phosphoserine mark is found at serine 473, serine 479, and serine 489. The interval glycine 476–threonine 513 is HP1 box. The PxVxL motif signature appears at leucine 481–aspartate 494. Threonine 498 bears the Phosphothreonine mark. At serine 501 the chain carries Phosphoserine. Lysine 507 participates in a covalent cross-link: Glycyl lysine isopeptide (Lys-Gly) (interchain with G-Cter in SUMO2). Threonine 541 carries the phosphothreonine modification. Residue lysine 554 forms a Glycyl lysine isopeptide (Lys-Gly) (interchain with G-Cter in SUMO2); alternate linkage. Lysine 554 participates in a covalent cross-link: Glycyl lysine isopeptide (Lys-Gly) (interchain with G-Cter in SUMO); alternate. Residue lysine 575 forms a Glycyl lysine isopeptide (Lys-Gly) (interchain with G-Cter in SUMO2) linkage. Positions glycine 584–proline 618 are disordered. Serine 594 bears the Phosphoserine mark. The PHD-type zinc finger occupies alanine 625–leucine 672. Residue lysine 676 forms a Glycyl lysine isopeptide (Lys-Gly) (interchain with G-Cter in SUMO) linkage. Residues serine 683, serine 689, and serine 697 each carry the phosphoserine modification. Residues lysine 695–alanine 799 enclose the Bromo domain. Lysine 750 is covalently cross-linked (Glycyl lysine isopeptide (Lys-Gly) (interchain with G-Cter in SUMO2); alternate). Residue lysine 750 forms a Glycyl lysine isopeptide (Lys-Gly) (interchain with G-Cter in SUMO1); alternate linkage. A Glycyl lysine isopeptide (Lys-Gly) (interchain with G-Cter in SUMO); alternate cross-link involves residue lysine 750. At serine 752 the chain carries Phosphoserine. Tyrosine 755 bears the Phosphotyrosine mark. Residue serine 757 is modified to Phosphoserine. N6-acetyllysine; alternate occurs at positions 770, 774, and 779. Glycyl lysine isopeptide (Lys-Gly) (interchain with G-Cter in SUMO2); alternate cross-links involve residues lysine 770, lysine 774, and lysine 779. Lysine 779 is covalently cross-linked (Glycyl lysine isopeptide (Lys-Gly) (interchain with G-Cter in SUMO1); alternate). Serine 784 is subject to Phosphoserine. A Glycyl lysine isopeptide (Lys-Gly) (interchain with G-Cter in SUMO2); alternate cross-link involves residue lysine 804. A Glycyl lysine isopeptide (Lys-Gly) (interchain with G-Cter in SUMO); alternate cross-link involves residue lysine 804. The segment at methionine 815–proline 835 is disordered. Phosphoserine; by ATM and ATR and dsDNA kinase is present on serine 824.

It belongs to the TRIM/RBCC family. As to quaternary structure, interacts with SETX. Oligomer; the RBCC domain homotrimerizes and interacts with one molecule of KRAB to form the KRAB-KAP1 corepressor complex. Binding to a KRAB domain is an absolute requirement for silencing gene expression. Interacts with CEBPB and NR3C1. Interacts with a number of KRAB-ZFP proteins including ZNF10, ZFP53, ZFP68, ZNF382 and ZNF256. Interacts with NCOR1, NR3C1 and CHD3. Interacts with CEBPB (via the RING-type and PHD-type zinc fingers). Component of a ternary complex that includes TRIM28, a HP1 protein (CBX1, CBX3 OR CBX5), a KRAB domain-containing protein, and DNA. Interacts with CBX5 (via the PxVxL motif); the interaction occurs in interphase nuclei and competes for binding POGZ. Interacts with POGZ; the interaction competes for interaction with CBX5. Interacts with SETDB1; the interaction is enhanced by KAP1 sumoylation, stimulates SETDB1 histone methyltransferase activity and gene silencing. Interacts (via the PHD-type zinc finger) with UBE2I; the interaction is required for sumoylation and repressor activity. Component of the TRIM28/KAP1-ERBB4-MDM2 complex involved in connecting growth factor and DNA damage responses. Interacts directly with ERBB4; the interaction represses ERBB4-mediated transcription activity. Interacts with MDM2; the interaction contributes to p53/TP53 inactivation. Component of the TRIM28/KAP1-MDM2-p53/TP53; involved in regulating p53/TP53 stabilization and activity. Interacts (via the leucine zipper alpha helical coiled-coil) with E2F1 (central region); the interaction inhibits E2F1 acetylation and transcriptional activity. Interacts with PPP1CA; the interaction dephosphorylates TRIM28 at Ser-824 and forms a complex at the p21 promoter site. Interacts with PPP1CB; the interaction is weak but is increased on dephosphorylation at Ser-824. Interacts with FES/FPS. Interacts with SMARCAD1. Interacts with, and sumoylates IRF7. Interacts with MAGEC2. Part of a complex composed of TRIM28, HDAC1, HDAC2 and EHMT2. Interacts with AICDA. Interacts (via the RBCC domain) with KOX1 (via the KRAB domain), ZNF268 (via the KRAB domain) and ZNF300 (via the KRAB domain); the interactions increase KOX1, ZNF268 and ZNF300 nuclear localization activities. The large PER complex involved in the histone methylation is composed of at least PER2, CBX3, TRIM28, SUV39H1 and/or SUV39H2; CBX3 mediates the formation of the complex. Interacts with isoform 2 of ZFP90. Forms a complex with FOXP3 in the presence of isoform 2 of ZFP90. Interacts with NR4A3; the interactions potentiates NR4A3 activity on NurRE promoter. Interacts (unphosphorylated or phosphorylated form) with ZBTB1 (via BTB domain). Probably part of a corepressor complex containing ZNF304, TRIM28, SETDB1 and DNMT1. Interacts with ATRX. Forms a complex with ATRX, SETDB1 and ZNF274. Interacts with ZFP568; the interaction mediates ZFP568 transcriptional repression activity. Interacts with RRP1B. Interacts with CRY1. Interacts with ZNF263; recruited to the SIX3 promoter along with other proteins involved in chromatin modification and transcriptional corepression where it contributes to transcriptional repression. Interacts with CYREN (via XLF motif). Interacts with TRIM17; this interaction prevents TRIM28 activity. Interacts with ZNF746. Interacts with PHF13. Interacts with ZNF354C. Interacts with ZNF432; the interaction is independent of PARP1. In terms of assembly, (Microbial infection) Interacts with herpes virus 8 protein LANA1; this interaction facilitates establishment of viral latency. Post-translationally, ATM-induced phosphorylation on Ser-824 represses sumoylation leading to the de-repression of expression of a subset of genes involved in cell cycle control and apoptosis in response to genotoxic stress. Dephosphorylation by the phosphatases, PPP1CA and PP1CB forms, allows sumoylation and expression of TRIM28 target genes. In terms of processing, sumoylation/desumoylation events regulate TRIM28-mediated transcriptional repression. Sumoylation is required for interaction with CHD3 and SETDB1 and the corepressor activity. Represses and is repressed by Ser-824 phosphorylation. Enhances the TRIM28 corepressor activity, inhibiting transcriptional activity of a number of genes including GADD45A and CDKN1A/p21. Lys-554, Lys-779 and Lys-804 are the major sites of sumoylation. In response to Dox-induced DNA damage, enhanced phosphorylation on Ser-824 prevents sumoylation and allows de-repression of CDKN1A/p21. Auto-ubiquitinated; enhanced by MAGEA2 and MAGEC2. Post-translationally, citrullinated by PADI4. In terms of processing, ADP-ribosylated by SIRT6, promoting TRIM28/KAP1 interaction with CBX5, thereby contributing to the packaging of LINE-1 retrotransposon elements into transcriptionally repressive heterochromatin. In terms of tissue distribution, expressed in all tissues tested including spleen, thymus, prostate, testis, ovary, small intestine, colon and peripheral blood leukocytes.

It localises to the nucleus. The catalysed reaction is S-ubiquitinyl-[E2 ubiquitin-conjugating enzyme]-L-cysteine + [acceptor protein]-L-lysine = [E2 ubiquitin-conjugating enzyme]-L-cysteine + N(6)-ubiquitinyl-[acceptor protein]-L-lysine.. It participates in protein modification; protein sumoylation. Nuclear corepressor for KRAB domain-containing zinc finger proteins (KRAB-ZFPs). Mediates gene silencing by recruiting CHD3, a subunit of the nucleosome remodeling and deacetylation (NuRD) complex, and SETDB1 (which specifically methylates histone H3 at 'Lys-9' (H3K9me)) to the promoter regions of KRAB target genes. Enhances transcriptional repression by coordinating the increase in H3K9me, the decrease in histone H3 'Lys-9 and 'Lys-14' acetylation (H3K9ac and H3K14ac, respectively) and the disposition of HP1 proteins to silence gene expression. Recruitment of SETDB1 induces heterochromatinization. May play a role as a coactivator for CEBPB and NR3C1 in the transcriptional activation of ORM1. Also a corepressor for ERBB4. Inhibits E2F1 activity by stimulating E2F1-HDAC1 complex formation and inhibiting E2F1 acetylation. May serve as a partial backup to prevent E2F1-mediated apoptosis in the absence of RB1. Important regulator of CDKN1A/p21(CIP1). Has E3 SUMO-protein ligase activity toward itself via its PHD-type zinc finger. Also specifically sumoylates IRF7, thereby inhibiting its transactivation activity. Ubiquitinates p53/TP53 leading to its proteasomal degradation; the function is enhanced by MAGEC2 and MAGEA2, and possibly MAGEA3 and MAGEA6. Mediates the nuclear localization of KOX1, ZNF268 and ZNF300 transcription factors. In association with isoform 2 of ZFP90, is required for the transcriptional repressor activity of FOXP3 and the suppressive function of regulatory T-cells (Treg). Probably forms a corepressor complex required for activated KRAS-mediated promoter hypermethylation and transcriptional silencing of tumor suppressor genes (TSGs) or other tumor-related genes in colorectal cancer (CRC) cells. Required to maintain a transcriptionally repressive state of genes in undifferentiated embryonic stem cells (ESCs). In ESCs, in collaboration with SETDB1, is also required for H3K9me3 and silencing of endogenous and introduced retroviruses in a DNA-methylation independent-pathway. Associates at promoter regions of tumor suppressor genes (TSGs) leading to their gene silencing. The SETDB1-TRIM28-ZNF274 complex may play a role in recruiting ATRX to the 3'-exons of zinc-finger coding genes with atypical chromatin signatures to establish or maintain/protect H3K9me3 at these transcriptionally active regions. Its function is as follows. (Microbial infection) Plays a critical role in the shutdown of lytic gene expression during the early stage of herpes virus 8 primary infection. This inhibition is mediated through interaction with herpes virus 8 protein LANA1. The polypeptide is Transcription intermediary factor 1-beta (Homo sapiens (Human)).